A 691-amino-acid chain; its full sequence is Guanylate cyclase soluble subunit alpha-1 (691 aa).

The segment at 26–65 (PREPLGEATGSGPASTPGQPGVCPGVPDKNPPGRLPRRKT) is disordered. The 128-residue stretch at 482–609 (TMLFSDIVGF…NNVTLANKFE (128 aa)) folds into the Guanylate cyclase domain.

The protein belongs to the adenylyl cyclase class-4/guanylyl cyclase family. As to quaternary structure, heterodimer of an alpha and a beta chain.

The protein resides in the cytoplasm. The catalysed reaction is GTP = 3',5'-cyclic GMP + diphosphate. Activated by nitric oxide in the presence of magnesium or manganese ions. In Bos taurus (Bovine), this protein is Guanylate cyclase soluble subunit alpha-1 (GUCY1A1).